Here is a 344-residue protein sequence, read N- to C-terminus: Ubiquitin-associated domain-containing protein 2 (344 aa).

A signal peptide spans 1–35; the sequence is MFTSTGSSGLYKAPLSKSLLLVPSALSLLLALLLP. Over 36–91 the chain is Extracellular; it reads HCQKLFVYDLHAVKNDFQIWRLICGRIICLDLKDTFCSSLLIYNFRIFERRYGSRK. Residues 92 to 112 form a helical membrane-spanning segment; sequence FASFLLGSWVLSALFDFLLIE. Residues 113 to 125 lie on the Cytoplasmic side of the membrane; that stretch reads AMQYFFGITAASN. The chain crosses the membrane as a helical span at residues 126–146; the sequence is LPSGFLAPVFALFVPFYCSIP. Residues 147–163 are Extracellular-facing; sequence RVQVAQILGPLSITNKT. N-linked (GlcNAc...) asparagine glycosylation is present at Asn-161. Residues 164–184 traverse the membrane as a helical segment; that stretch reads LIYILGLQLFTSGSYIWIVAI. At 185–344 the chain is on the cytoplasmic side; it reads SGLMSGLCYD…NVATNFLLQH (160 aa). Residues 304–344 enclose the UBA domain; sequence EVSEEQVARLMEMGFSRGDALEALRASNNDLNVATNFLLQH.

As to quaternary structure, interacts with FAF2. Interacts with LMBR1L. Interacts with AMFR and VCP.

Its subcellular location is the endoplasmic reticulum membrane. Functionally, restricts trafficking of FAF2 from the endoplasmic reticulum to lipid droplets. In association with LMBR1L and E3 ubiquitin-protein ligase AMFR, negatively regulates the canonical Wnt signaling pathway in the lymphocytes by promoting the ubiquitin-mediated degradation of CTNNB1 and Wnt receptors FZD6 and LRP6. The chain is Ubiquitin-associated domain-containing protein 2 (UBAC2) from Homo sapiens (Human).